Here is a 351-residue protein sequence, read N- to C-terminus: Nicotinate-nucleotide--dimethylbenzimidazole phosphoribosyltransferase (351 aa).

The active-site Proton acceptor is the E317.

It belongs to the CobT family.

The enzyme catalyses 5,6-dimethylbenzimidazole + nicotinate beta-D-ribonucleotide = alpha-ribazole 5'-phosphate + nicotinate + H(+). It functions in the pathway nucleoside biosynthesis; alpha-ribazole biosynthesis; alpha-ribazole from 5,6-dimethylbenzimidazole: step 1/2. Its function is as follows. Catalyzes the synthesis of alpha-ribazole-5'-phosphate from nicotinate mononucleotide (NAMN) and 5,6-dimethylbenzimidazole (DMB). This is Nicotinate-nucleotide--dimethylbenzimidazole phosphoribosyltransferase from Pseudomonas putida (strain GB-1).